Here is a 166-residue protein sequence, read N- to C-terminus: NAD(P)H-quinone oxidoreductase subunit I, chloroplastic (166 aa).

4Fe-4S ferredoxin-type domains follow at residues 55–84 and 95–124; these read GRIHFEFDKCIACEVCVRVCPIDLPVVDWK and LNYSIDFGICIFCGNCVEYCPTNCLSMTEE. [4Fe-4S] cluster contacts are provided by C64, C67, C70, C74, C104, C107, C110, and C114.

This sequence belongs to the complex I 23 kDa subunit family. NDH is composed of at least 16 different subunits, 5 of which are encoded in the nucleus. The cofactor is [4Fe-4S] cluster.

It localises to the plastid. Its subcellular location is the chloroplast thylakoid membrane. It carries out the reaction a plastoquinone + NADH + (n+1) H(+)(in) = a plastoquinol + NAD(+) + n H(+)(out). The enzyme catalyses a plastoquinone + NADPH + (n+1) H(+)(in) = a plastoquinol + NADP(+) + n H(+)(out). NDH shuttles electrons from NAD(P)H:plastoquinone, via FMN and iron-sulfur (Fe-S) centers, to quinones in the photosynthetic chain and possibly in a chloroplast respiratory chain. The immediate electron acceptor for the enzyme in this species is believed to be plastoquinone. Couples the redox reaction to proton translocation, and thus conserves the redox energy in a proton gradient. This chain is NAD(P)H-quinone oxidoreductase subunit I, chloroplastic, found in Laphamia lindheimeri (Lindheimer's rockdaisy).